Consider the following 312-residue polypeptide: DNA-directed RNA polymerase subunit alpha (312 aa).

The tract at residues methionine 1 to serine 229 is alpha N-terminal domain (alpha-NTD). Residues glutamate 239–alanine 312 form an alpha C-terminal domain (alpha-CTD) region.

Belongs to the RNA polymerase alpha chain family. In terms of assembly, in cyanobacteria the RNAP catalytic core is composed of 2 alpha, 1 beta, 1 beta', 1 gamma and 1 omega subunit. When a sigma factor is associated with the core the holoenzyme is formed, which can initiate transcription.

The catalysed reaction is RNA(n) + a ribonucleoside 5'-triphosphate = RNA(n+1) + diphosphate. DNA-dependent RNA polymerase catalyzes the transcription of DNA into RNA using the four ribonucleoside triphosphates as substrates. This is DNA-directed RNA polymerase subunit alpha from Prochlorococcus marinus (strain NATL1A).